We begin with the raw amino-acid sequence, 137 residues long: uncharacterized protein (137 aa).

3 helical membrane passes run 5 to 25, 79 to 99, and 109 to 129; these read ELLWPALITALATMLYLVLVI, IAAILGAVWLLGRILYAWGYY, and FALGSLSSMILVVGALLSILW.

Belongs to the MAPEG family.

It is found in the cell membrane. This is an uncharacterized protein from Synechocystis sp. (strain ATCC 27184 / PCC 6803 / Kazusa).